Reading from the N-terminus, the 434-residue chain is Enolase (434 aa).

Substrate-binding residues include H158 and E167. Catalysis depends on E210, which acts as the Proton donor. Mg(2+) is bound by residues D245, E294, and D319. Substrate contacts are provided by E294 and D319. K344 functions as the Proton acceptor in the catalytic mechanism. Substrate-binding positions include 371–374 and K395; that span reads SHRS.

The protein belongs to the enolase family. In terms of assembly, homodimer. It depends on Mg(2+) as a cofactor.

The protein resides in the cytoplasm. The enzyme catalyses (2R)-2-phosphoglycerate = phosphoenolpyruvate + H2O. The protein operates within carbohydrate degradation; glycolysis; pyruvate from D-glyceraldehyde 3-phosphate: step 4/5. The protein is Enolase of Doryteuthis pealeii (Longfin inshore squid).